We begin with the raw amino-acid sequence, 200 residues long: Serine/threonine-protein kinase mos (200 aa).

One can recognise a Protein kinase domain in the interval 2–200 (LCLLQPLGSG…ELLKGERVTA (199 aa)). ATP is bound by residues 8–16 (LGSGGFGSV) and Lys29. The Proton acceptor role is filled by Asp143.

Belongs to the protein kinase superfamily. Ser/Thr protein kinase family.

It catalyses the reaction L-seryl-[protein] + ATP = O-phospho-L-seryl-[protein] + ADP + H(+). The enzyme catalyses L-threonyl-[protein] + ATP = O-phospho-L-threonyl-[protein] + ADP + H(+). The chain is Serine/threonine-protein kinase mos (MOS) from Ciconia nigra (Black stork).